The following is a 397-amino-acid chain: Phosphoglycerate kinase (397 aa).

Substrate-binding positions include 25 to 27 (DLN), Arg-41, 64 to 67 (HLGR), Arg-118, and Arg-151. ATP contacts are provided by residues Lys-202, Glu-324, and 350–353 (GGDT).

This sequence belongs to the phosphoglycerate kinase family. In terms of assembly, monomer.

Its subcellular location is the cytoplasm. The catalysed reaction is (2R)-3-phosphoglycerate + ATP = (2R)-3-phospho-glyceroyl phosphate + ADP. It functions in the pathway carbohydrate degradation; glycolysis; pyruvate from D-glyceraldehyde 3-phosphate: step 2/5. In Acidovorax ebreus (strain TPSY) (Diaphorobacter sp. (strain TPSY)), this protein is Phosphoglycerate kinase.